Reading from the N-terminus, the 195-residue chain is Holliday junction branch migration complex subunit RuvA (195 aa).

Residues 1-61 form a domain I region; that stretch reads MYEYFEGIIS…DTGITLYGFQ (61 aa). The tract at residues 62-140 is domain II; that stretch reads DQDDKGLFLK…DYVARLDKPE (79 aa). Residues 141-146 are flexible linker; that stretch reads NGEEIS. The domain III stretch occupies residues 146 to 195; sequence SPALNDALLALIALGYTQKEVDRITPKLVEIEADTADQYIKKGLALLLKK.

The protein belongs to the RuvA family. As to quaternary structure, homotetramer. Forms an RuvA(8)-RuvB(12)-Holliday junction (HJ) complex. HJ DNA is sandwiched between 2 RuvA tetramers; dsDNA enters through RuvA and exits via RuvB. An RuvB hexamer assembles on each DNA strand where it exits the tetramer. Each RuvB hexamer is contacted by two RuvA subunits (via domain III) on 2 adjacent RuvB subunits; this complex drives branch migration. In the full resolvosome a probable DNA-RuvA(4)-RuvB(12)-RuvC(2) complex forms which resolves the HJ.

It is found in the cytoplasm. Its function is as follows. The RuvA-RuvB-RuvC complex processes Holliday junction (HJ) DNA during genetic recombination and DNA repair, while the RuvA-RuvB complex plays an important role in the rescue of blocked DNA replication forks via replication fork reversal (RFR). RuvA specifically binds to HJ cruciform DNA, conferring on it an open structure. The RuvB hexamer acts as an ATP-dependent pump, pulling dsDNA into and through the RuvAB complex. HJ branch migration allows RuvC to scan DNA until it finds its consensus sequence, where it cleaves and resolves the cruciform DNA. The chain is Holliday junction branch migration complex subunit RuvA from Lactobacillus acidophilus (strain ATCC 700396 / NCK56 / N2 / NCFM).